A 666-amino-acid polypeptide reads, in one-letter code: Peptidase S41 family protein phomP1 (666 aa).

An N-terminal signal peptide occupies residues 1-27; that stretch reads MSSFLVQTAVVRLFLLGVVFWFPFALS. N-linked (GlcNAc...) asparagine glycans are attached at residues asparagine 70, asparagine 214, and asparagine 234. The peptidase S41 domain stretch occupies residues 303-504; the sequence is DVAVLQITSF…LLQAQGVRTV (202 aa). N-linked (GlcNAc...) asparagine glycans are attached at residues asparagine 555 and asparagine 612.

It belongs to the peptidase S41A family.

It functions in the pathway mycotoxin biosynthesis. Its function is as follows. Peptidase S41 family protein; part of the gene cluster that mediates the biosynthesis of the phomopsins, a group of hexapeptide mycotoxins which infects lupins and causes lupinosis disease in livestock. Within the pathway, phomP1 and phomP1' are probably involved in the processing of the phomA and phomA' precursors. The pathway starts with the processing of the precursor phomA by several endopeptidases including kexin proteases as well as the cluster-specific S41 family peptidase phomP1 and the oligopeptidase phomG to produce 10 identical copies of the hexapeptide Tyr-Val-Ile-Pro-Ile-Asp. After being excised from the precursor peptide, the core peptides are cyclized and modified post-translationally by enzymes encoded within the gene cluster. The timing and order of proteolysis of the phomA precursor and PTMs are still unknown. Two tyrosinase-like enzymes, phomQ1 and phomQ2, catalyze the chlorination and hydroxylation of Tyr, respectively. PhomYb, is proposed to be involved in the construction of the macrocyclic structure. The other 4 ustYa family proteins may be involved in PTMs that generate the unique structure of phomopsin A. PhomYa is required for the hydroxylation of C-beta of Tyr. PhomYc, phomYd, and phomYe are responsible for the biosynthesis of 2,3-dehydroisoleucine (dIle), 2,3-dehydroaspartic acid (dAsp), and 3,4-dehydroproline (dPro), respectively. While dIle formation by phomYc is indispensable for the installation of dAsp by phomYd, the order of the other PTMs have not been elucidated yet. Most of the biosynthetic enzymes likely have broad substrate specificity, and thus, there might be a metabolic grid from a precursor to phomopsin A. The enzyme(s) responsible for the biosynthesis of 3,4-dehydrovaline (dVal) have also not been identified yet. Finally, phomM acts as an S-adenosylmethionine-dependent alpha-N-methyltransferase that catalyzes two successive N-methylation reactions, converting N-desmethyl-phomopsin A to phomopsin A and phomopsin A further to an N,N-dimethylated congener called phomopsin E. The chain is Peptidase S41 family protein phomP1 from Diaporthe leptostromiformis (Lupinosis disease fungus).